The following is a 681-amino-acid chain: Glutamine--fructose-6-phosphate aminotransferase [isomerizing] 1 (681 aa).

The active-site For GATase activity is cysteine 2. A Glutamine amidotransferase type-2 domain is found at 2-287; it reads CGIFAYLNYH…DDDVAAVVDG (286 aa). A phosphoserine mark is found at serine 103 and serine 243. The interval 295 to 662 is isomerase; that stretch reads KRTARDHPGR…LQLLAFHLAV (368 aa). 2 consecutive SIS domains span residues 359-498 and 530-671; these read HIKE…DRIS and LATE…VDFP. Substrate-binding positions include 376-377, 421-423, threonine 426, and histidine 577; these read TS and SQS.

As to quaternary structure, homotetramer, may also exist as homodimers.

The enzyme catalyses D-fructose 6-phosphate + L-glutamine = D-glucosamine 6-phosphate + L-glutamate. It functions in the pathway nucleotide-sugar biosynthesis; UDP-N-acetyl-alpha-D-glucosamine biosynthesis; alpha-D-glucosamine 6-phosphate from D-fructose 6-phosphate: step 1/1. Inhibited by 4,4'-dithiodipyridine. In terms of biological role, controls the flux of glucose into the hexosamine pathway. Most likely involved in regulating the availability of precursors for N- and O-linked glycosylation of proteins. Regulates the circadian expression of clock genes BMAL1 and CRY1. Has a role in fine tuning the metabolic fluctuations of cytosolic UDP-GlcNAc and its effects on hyaluronan synthesis that occur during tissue remodeling. In Rattus norvegicus (Rat), this protein is Glutamine--fructose-6-phosphate aminotransferase [isomerizing] 1 (Gfpt1).